The chain runs to 249 residues: Imidazole glycerol phosphate synthase subunit HisF (249 aa).

Active-site residues include D11 and D130.

Belongs to the HisA/HisF family. Heterodimer of HisH and HisF.

Its subcellular location is the cytoplasm. It carries out the reaction 5-[(5-phospho-1-deoxy-D-ribulos-1-ylimino)methylamino]-1-(5-phospho-beta-D-ribosyl)imidazole-4-carboxamide + L-glutamine = D-erythro-1-(imidazol-4-yl)glycerol 3-phosphate + 5-amino-1-(5-phospho-beta-D-ribosyl)imidazole-4-carboxamide + L-glutamate + H(+). It functions in the pathway amino-acid biosynthesis; L-histidine biosynthesis; L-histidine from 5-phospho-alpha-D-ribose 1-diphosphate: step 5/9. Its function is as follows. IGPS catalyzes the conversion of PRFAR and glutamine to IGP, AICAR and glutamate. The HisF subunit catalyzes the cyclization activity that produces IGP and AICAR from PRFAR using the ammonia provided by the HisH subunit. The chain is Imidazole glycerol phosphate synthase subunit HisF from Sulfolobus acidocaldarius (strain ATCC 33909 / DSM 639 / JCM 8929 / NBRC 15157 / NCIMB 11770).